Reading from the N-terminus, the 101-residue chain is Urease subunit beta (101 aa).

The protein belongs to the urease beta subunit family. As to quaternary structure, heterotrimer of UreA (gamma), UreB (beta) and UreC (alpha) subunits. Three heterotrimers associate to form the active enzyme.

The protein localises to the cytoplasm. It catalyses the reaction urea + 2 H2O + H(+) = hydrogencarbonate + 2 NH4(+). It functions in the pathway nitrogen metabolism; urea degradation; CO(2) and NH(3) from urea (urease route): step 1/1. This is Urease subunit beta from Azoarcus sp. (strain BH72).